The primary structure comprises 711 residues: Putative DNA topoisomerase 3 (711 aa).

Residues 2–135 (KYLILAEKPS…LRRLWISSVT (134 aa)) enclose the Toprim domain. Residues Glu-8 and Asp-104 each coordinate Mg(2+). The region spanning 152 to 580 (YNDLYYAALA…EMKGFTKDVV (429 aa)) is the Topo IA-type catalytic domain. Residues 186–191 (SLGRVQ) form an interaction with DNA region. The O-(5'-phospho-DNA)-tyrosine intermediate role is filled by Tyr-305. The disordered stretch occupies residues 691–711 (MNKNEGLDNNPFKDALKNLNL).

This sequence belongs to the type IA topoisomerase family. It depends on Mg(2+) as a cofactor.

The enzyme catalyses ATP-independent breakage of single-stranded DNA, followed by passage and rejoining.. Functionally, releases the supercoiling and torsional tension of DNA, which is introduced during the DNA replication and transcription, by transiently cleaving and rejoining one strand of the DNA duplex. Introduces a single-strand break via transesterification at a target site in duplex DNA. The scissile phosphodiester is attacked by the catalytic tyrosine of the enzyme, resulting in the formation of a DNA-(5'-phosphotyrosyl)-enzyme intermediate and the expulsion of a 3'-OH DNA strand. The free DNA strand then undergoes passage around the unbroken strand, thus removing DNA supercoils. Finally, in the religation step, the DNA 3'-OH attacks the covalent intermediate to expel the active-site tyrosine and restore the DNA phosphodiester backbone. The polypeptide is Putative DNA topoisomerase 3 (Staphylococcus aureus (strain bovine RF122 / ET3-1)).